Here is a 240-residue protein sequence, read N- to C-terminus: Biosynthetic peptidoglycan transglycosylase (240 aa).

Residues 15–35 form a helical membrane-spanning segment; that stretch reads WMFYLGAVVAIAWLATQAFYF.

The protein belongs to the glycosyltransferase 51 family.

The protein resides in the cell inner membrane. It catalyses the reaction [GlcNAc-(1-&gt;4)-Mur2Ac(oyl-L-Ala-gamma-D-Glu-L-Lys-D-Ala-D-Ala)](n)-di-trans,octa-cis-undecaprenyl diphosphate + beta-D-GlcNAc-(1-&gt;4)-Mur2Ac(oyl-L-Ala-gamma-D-Glu-L-Lys-D-Ala-D-Ala)-di-trans,octa-cis-undecaprenyl diphosphate = [GlcNAc-(1-&gt;4)-Mur2Ac(oyl-L-Ala-gamma-D-Glu-L-Lys-D-Ala-D-Ala)](n+1)-di-trans,octa-cis-undecaprenyl diphosphate + di-trans,octa-cis-undecaprenyl diphosphate + H(+). It participates in cell wall biogenesis; peptidoglycan biosynthesis. Its function is as follows. Peptidoglycan polymerase that catalyzes glycan chain elongation from lipid-linked precursors. The chain is Biosynthetic peptidoglycan transglycosylase from Paraburkholderia xenovorans (strain LB400).